A 130-amino-acid chain; its full sequence is MAIVGVGIDLVSIPDFAEQVDRPGTVFAETFTPGERRDAADKSSSAARHLAARWAAKEAVIKAWSGSRFAKRPALPEGIHRDIEVVTDMWGRPKVRLTGDIAEHLREATIHVSLTHEGDTAAAVAVIEEP.

Residues Asp9 and Glu58 each coordinate Mg(2+).

It belongs to the P-Pant transferase superfamily. AcpS family. It depends on Mg(2+) as a cofactor.

It is found in the cytoplasm. The catalysed reaction is apo-[ACP] + CoA = holo-[ACP] + adenosine 3',5'-bisphosphate + H(+). In terms of biological role, transfers the 4'-phosphopantetheine moiety from coenzyme A to a Ser of acyl-carrier-protein. This chain is Holo-[acyl-carrier-protein] synthase, found in Mycobacterium sp. (strain JLS).